A 355-amino-acid polypeptide reads, in one-letter code: Probable butyrate kinase (355 aa).

It belongs to the acetokinase family.

The protein localises to the cytoplasm. The enzyme catalyses butanoate + ATP = butanoyl phosphate + ADP. This Clostridium botulinum (strain Alaska E43 / Type E3) protein is Probable butyrate kinase.